A 164-amino-acid polypeptide reads, in one-letter code: Galectin-3 (164 aa).

In terms of domain architecture, Galectin spans 9–154; the sequence is STVDLSEPLK…FSDVLGVTVL (146 aa). Residues His-60, Arg-64, Asn-73, and Glu-84 each coordinate a carbohydrate.

Homotetramer. Oligomerization is required for carbohydrate binding.

The protein localises to the secreted. It localises to the extracellular space. It is found in the extracellular matrix. The protein resides in the cell wall. Binds lactose. May play a role in fruiting body formation. The chain is Galectin-3 (Cgl3) from Coprinopsis cinerea (strain Okayama-7 / 130 / ATCC MYA-4618 / FGSC 9003) (Inky cap fungus).